The sequence spans 887 residues: Phosphatidylinositol 3-kinase catalytic subunit type 3 (887 aa).

One can recognise a C2 PI3K-type domain in the interval 35–184; the sequence is YKAVLEDPML…LAKLTKAHRQ (150 aa). The tract at residues 150–170 is disordered; it reads EADGSEPTKTPGRTSSTLSED. Polar residues predominate over residues 156-170; that stretch reads PTKTPGRTSSTLSED. Threonine 163 is modified (phosphothreonine; by AMPK). Serine 165 carries the post-translational modification Phosphoserine; by AMPK. Residues serine 244, serine 261, and serine 282 each carry the phosphoserine modification. One can recognise a PIK helical domain in the interval 282–520; that stretch reads SDHGLKPNAA…PKTHEMYLNV (239 aa). 2 disordered regions span residues 416–435 and 446–468; these read EPTK…NSGI and ITSP…SSDG. Over residues 423-435 the composition is skewed to low complexity; sequence QGSVSESVSNSGI. Over residues 449 to 459 the composition is skewed to pro residues; sequence PLPPVSSPPPA. Residues 605–871 enclose the PI3K/PI4K catalytic domain; that stretch reads IPETATLFKS…LIDESVHALF (267 aa). Positions 611-617 are G-loop; it reads LFKSALM. The segment at 740–748 is catalytic loop; the sequence is GVGDRHLDN. Positions 759–780 are activation loop; sequence HIDFGYILGRDPKPLPPPMKLN.

It belongs to the PI3/PI4-kinase family. As to quaternary structure, component of the PI3K (PI3KC3/PI3K-III/class III phosphatidylinositol 3-kinase) complex the core of which is composed of the catalytic subunit PIK3C3, the regulatory subunit PIK3R4 and BECN1 associating with additional regulatory/auxiliary subunits to form alternative complex forms. Alternative complex forms containing a fourth regulatory subunit in a mutually exclusive manner are: the PI3K complex I (PI3KC3-C1) containing ATG14, and the PI3K complex II (PI3KC3-C2) containing UVRAG. PI3KC3-C1 displays a V-shaped architecture with PIK3R4 serving as a bridge between PIK3C3 and the ATG14:BECN1 subcomplex. Both, PI3KC3-C1 and PI3KC3-C2, can associate with further regulatory subunits such as RUBCN, SH3GLB1/Bif-1 and AMBRA1. PI3KC3-C1 probably associates with PIK3CB. Interacts with RAB7A in the presence of PIK3R4. Interacts with AMBRA1. Interacts with BECN1P1/BECN2. Interacts with SLAMF1. May be a component of a complex composed of RAB5A (in GDP-bound form), DYN2 and PIK3C3. Interacts with NCKAP1L. Interacts with ATG14; this interaction is increased in the absence of TMEM39A. Interacts with STEEP1; the interaction is STING1-dependent and required for trafficking of STING1 from the endoplasmic reticulum. Interacts with YWHAG. Interacts with ARMC3. It depends on Mn(2+) as a cofactor. Ubiquitinated via 'Lys-29'- and 'Lys-48'-linked ubiquitination by UBE3C, promoting its degradation. Deubiquitination by ZRANB1/TRABID promotes its stabilization, leading to autophagosome maturation.

It is found in the midbody. Its subcellular location is the late endosome. The protein resides in the cytoplasmic vesicle. The protein localises to the autophagosome. It catalyses the reaction a 1,2-diacyl-sn-glycero-3-phospho-(1D-myo-inositol) + ATP = a 1,2-diacyl-sn-glycero-3-phospho-(1D-myo-inositol-3-phosphate) + ADP + H(+). Catalytic subunit of the PI3K complex that mediates formation of phosphatidylinositol 3-phosphate; different complex forms are believed to play a role in multiple membrane trafficking pathways: PI3KC3-C1 is involved in initiation of autophagosomes and PI3KC3-C2 in maturation of autophagosomes and endocytosis. As part of PI3KC3-C1, promotes endoplasmic reticulum membrane curvature formation prior to vesicle budding. Involved in regulation of degradative endocytic trafficking and required for the abscission step in cytokinesis, probably in the context of PI3KC3-C2. Involved in the transport of lysosomal enzyme precursors to lysosomes. Required for transport from early to late endosomes. This chain is Phosphatidylinositol 3-kinase catalytic subunit type 3, found in Sus scrofa (Pig).